The primary structure comprises 340 residues: Heat-inducible transcription repressor HrcA (340 aa).

This sequence belongs to the HrcA family.

Negative regulator of class I heat shock genes (grpE-dnaK-dnaJ and groELS operons). Prevents heat-shock induction of these operons. The polypeptide is Heat-inducible transcription repressor HrcA (Burkholderia ambifaria (strain MC40-6)).